The chain runs to 425 residues: Serine--tRNA ligase (425 aa).

233 to 235 (TAE) is a binding site for L-serine. Residue 264-266 (RRE) participates in ATP binding. Glu-287 provides a ligand contact to L-serine. 351–354 (EISS) is a binding site for ATP. Ser-387 provides a ligand contact to L-serine.

This sequence belongs to the class-II aminoacyl-tRNA synthetase family. Type-1 seryl-tRNA synthetase subfamily. Homodimer. The tRNA molecule binds across the dimer.

It is found in the cytoplasm. The catalysed reaction is tRNA(Ser) + L-serine + ATP = L-seryl-tRNA(Ser) + AMP + diphosphate + H(+). It catalyses the reaction tRNA(Sec) + L-serine + ATP = L-seryl-tRNA(Sec) + AMP + diphosphate + H(+). It functions in the pathway aminoacyl-tRNA biosynthesis; selenocysteinyl-tRNA(Sec) biosynthesis; L-seryl-tRNA(Sec) from L-serine and tRNA(Sec): step 1/1. Functionally, catalyzes the attachment of serine to tRNA(Ser). Is also able to aminoacylate tRNA(Sec) with serine, to form the misacylated tRNA L-seryl-tRNA(Sec), which will be further converted into selenocysteinyl-tRNA(Sec). The polypeptide is Serine--tRNA ligase (Thermotoga petrophila (strain ATCC BAA-488 / DSM 13995 / JCM 10881 / RKU-1)).